The chain runs to 283 residues: Thymidylate synthase (283 aa).

Arg22 contributes to the dUMP binding site. Cys160 acts as the Nucleophile in catalysis. DUMP is bound by residues 180–183 (RSAD), Asn191, and 221–223 (HIY). Asp183 serves as a coordination point for (6R)-5,10-methylene-5,6,7,8-tetrahydrofolate. Residue Ser282 coordinates (6R)-5,10-methylene-5,6,7,8-tetrahydrofolate.

This sequence belongs to the thymidylate synthase family. Bacterial-type ThyA subfamily. Homodimer.

It is found in the cytoplasm. It catalyses the reaction dUMP + (6R)-5,10-methylene-5,6,7,8-tetrahydrofolate = 7,8-dihydrofolate + dTMP. The protein operates within pyrimidine metabolism; dTTP biosynthesis. Its function is as follows. Catalyzes the reductive methylation of 2'-deoxyuridine-5'-monophosphate (dUMP) to 2'-deoxythymidine-5'-monophosphate (dTMP) while utilizing 5,10-methylenetetrahydrofolate (mTHF) as the methyl donor and reductant in the reaction, yielding dihydrofolate (DHF) as a by-product. This enzymatic reaction provides an intracellular de novo source of dTMP, an essential precursor for DNA biosynthesis. The sequence is that of Thymidylate synthase from Glaesserella parasuis serovar 5 (strain SH0165) (Haemophilus parasuis).